Reading from the N-terminus, the 181-residue chain is Shikimate kinase (181 aa).

ATP is bound at residue 17–22; that stretch reads GAGKTT. Position 21 (Thr-21) interacts with Mg(2+). Residues Asp-39, Arg-63, and Gly-85 each contribute to the substrate site. Residue Arg-122 coordinates ATP. Substrate is bound at residue Arg-141.

It belongs to the shikimate kinase family. In terms of assembly, monomer. It depends on Mg(2+) as a cofactor.

It localises to the cytoplasm. The enzyme catalyses shikimate + ATP = 3-phosphoshikimate + ADP + H(+). It participates in metabolic intermediate biosynthesis; chorismate biosynthesis; chorismate from D-erythrose 4-phosphate and phosphoenolpyruvate: step 5/7. Catalyzes the specific phosphorylation of the 3-hydroxyl group of shikimic acid using ATP as a cosubstrate. This Trichormus variabilis (strain ATCC 29413 / PCC 7937) (Anabaena variabilis) protein is Shikimate kinase.